The chain runs to 251 residues: Guanine nucleotide-binding protein subunit gamma 3 (251 aa).

Residues 1–10 (MSAPSGGGEG) show a composition bias toward gly residues. The interval 1-44 (MSAPSGGGEGGGKESAAGGVSSSSLAPSSLPPPRPKSPPEYPDL) is disordered. Over residues 14–28 (ESAAGGVSSSSLAPS) the composition is skewed to low complexity. Over residues 29–41 (SLPPPRPKSPPEY) the composition is skewed to pro residues. Residues 46-126 (GKRREAARVQ…LSLVSFCCCC (81 aa)) form the G protein gamma domain. Cys248 bears the Cysteine methyl ester mark. Cys248 carries S-farnesyl cysteine lipidation. Residues 249–251 (LAF) constitute a propeptide, removed in mature form.

In terms of assembly, g proteins are composed of 3 units, alpha, beta and gamma. In terms of tissue distribution, expressed in flowers and siliques.

Its function is as follows. Guanine nucleotide-binding proteins (G proteins) are involved as a modulator or transducer in various transmembrane signaling systems. The beta and gamma chains are required for the GTPase activity, for replacement of GDP by GTP, and for G protein-effector interaction. The polypeptide is Guanine nucleotide-binding protein subunit gamma 3 (GG3) (Arabidopsis thaliana (Mouse-ear cress)).